A 129-amino-acid polypeptide reads, in one-letter code: uncharacterized protein (129 aa).

Acidic residues predominate over residues 86–96 (NDGFSSDDEPE). A disordered region spans residues 86-116 (NDGFSSDDEPEEHVILTEDNQGEPSETPQAT). Polar residues predominate over residues 103–116 (EDNQGEPSETPQAT).

This sequence belongs to the asfivirus D129L family.

This is an uncharacterized protein from African swine fever virus (strain Badajoz 1971 Vero-adapted) (Ba71V).